A 237-amino-acid chain; its full sequence is Small ribosomal subunit protein uS17m (237 aa).

The protein belongs to the universal ribosomal protein uS17 family. In terms of assembly, component of the mitochondrial small ribosomal subunit (mt-SSU). Mature yeast 74S mitochondrial ribosomes consist of a small (37S) and a large (54S) subunit. The 37S small subunit contains a 15S ribosomal RNA (15S mt-rRNA) and 34 different proteins. The 54S large subunit contains a 21S rRNA (21S mt-rRNA) and 46 different proteins.

It is found in the mitochondrion. In terms of biological role, component of the mitochondrial ribosome (mitoribosome), a dedicated translation machinery responsible for the synthesis of mitochondrial genome-encoded proteins, including at least some of the essential transmembrane subunits of the mitochondrial respiratory chain. The mitoribosomes are attached to the mitochondrial inner membrane and translation products are cotranslationally integrated into the membrane. uS17m may have a meiosis-specific role as it accumulates during the middle stage of sporulation. The protein is Small ribosomal subunit protein uS17m (MRPS17) of Saccharomyces cerevisiae (strain ATCC 204508 / S288c) (Baker's yeast).